The primary structure comprises 104 residues: Nucleoid-associated protein jk2011 (104 aa).

Belongs to the YbaB/EbfC family. Homodimer.

The protein resides in the cytoplasm. The protein localises to the nucleoid. In terms of biological role, binds to DNA and alters its conformation. May be involved in regulation of gene expression, nucleoid organization and DNA protection. This Corynebacterium jeikeium (strain K411) protein is Nucleoid-associated protein jk2011.